Consider the following 481-residue polypeptide: Glutamyl-tRNA(Gln) amidotransferase subunit A (481 aa).

Catalysis depends on charge relay system residues lysine 74 and serine 149. Serine 173 (acyl-ester intermediate) is an active-site residue.

It belongs to the amidase family. GatA subfamily. In terms of assembly, heterotrimer of A, B and C subunits.

It catalyses the reaction L-glutamyl-tRNA(Gln) + L-glutamine + ATP + H2O = L-glutaminyl-tRNA(Gln) + L-glutamate + ADP + phosphate + H(+). Functionally, allows the formation of correctly charged Gln-tRNA(Gln) through the transamidation of misacylated Glu-tRNA(Gln) in organisms which lack glutaminyl-tRNA synthetase. The reaction takes place in the presence of glutamine and ATP through an activated gamma-phospho-Glu-tRNA(Gln). This Francisella tularensis subsp. mediasiatica (strain FSC147) protein is Glutamyl-tRNA(Gln) amidotransferase subunit A.